Here is a 499-residue protein sequence, read N- to C-terminus: Endosomal/lysosomal proton channel TMEM175 (499 aa).

Polar residues predominate over residues 1–10; that stretch reads MSRLQVQEQA. Positions 1-26 are disordered; sequence MSRLQVQEQAVDSEGDSSLYRRDEEG. Residues 1–30 lie on the Cytoplasmic side of the membrane; sequence MSRLQVQEQAVDSEGDSSLYRRDEEGTQSS. Residues 31–53 traverse the membrane as a helical segment; the sequence is HRMLGFSDALLSIIATVMILPVT. Positions 32–38 match the RxxxFSD motif 1 motif; it reads RMLGFSD. The Lumenal portion of the chain corresponds to 54-74; that stretch reads HTEISPEQQFDKSIQKLLATR. Positions 55–60 are short helix H1-1; it reads TEISPE. Residues 62 to 68 are short helix H2-1; the sequence is QFDKSIQ. Residues 75–97 form a helical membrane-spanning segment; it reads IAVYLMTFLIVTVAWAAHTRLFQ. At 98–103 the chain is on the cytoplasmic side; it reads VVGKID. A helical membrane pass occupies residues 104–125; it reads DTLALLNLACMMTITLLPYTFS. At 126 to 135 the chain is on the lumenal side; sequence LMVTFPDVPL. A helical membrane pass occupies residues 136–157; it reads GIFLFCMCVIAIGSVQAMIVGY. Residues 158–181 are Cytoplasmic-facing; the sequence is AFHFPHLLNPQIQCSTHRALSRRH. Residues 182-202 form a helical membrane-spanning segment; that stretch reads ILHLVLRGPALCFVAAVFSLF. At 203–207 the chain is on the lumenal side; the sequence is FFPLS. The helical transmembrane segment at 208 to 227 threads the bilayer; sequence YLLMVTVIFLPHISKATTWC. The Cytoplasmic portion of the chain corresponds to 228 to 254; the sequence is KDKFMGHRESPAHNVEPFSIDLHAPLS. A helical transmembrane segment spans residues 255 to 279; it reads KERVEAFSDGVYAIVATLLILDICE. A RxxxFSD motif 2 motif is present at residues 257–263; that stretch reads RVEAFSD. The Lumenal segment spans residues 280-306; that stretch reads DNVPDPKDVQQKFSGSLVAALGAYGPQ. The short helix H1-2 stretch occupies residues 285–293; that stretch reads PKDVQQKFS. Residues 295–301 form a short helix H2-2 region; that stretch reads SLVAALG. Residues 307 to 329 form a helical membrane-spanning segment; it reads FLAYFGSFATVGLLWFAHHSLFL. At 330–335 the chain is on the cytoplasmic side; the sequence is HVRKAT. A helical membrane pass occupies residues 336–357; sequence QTMGLFNILSLAFVGGLPLAYQ. Over 358–372 the chain is Lumenal; that stretch reads QTSAFARQPRDELER. Residues 373 to 393 traverse the membrane as a helical segment; sequence VRVSCAIIFFASIFQFAIWTT. The Cytoplasmic portion of the chain corresponds to 394-413; sequence ALLHQRETLQPAVQFGGQEH. Residues 414–437 traverse the membrane as a helical segment; that stretch reads AFMFAKLALYPCASLLAFAATCLL. Residues 438–439 are Lumenal-facing; that stretch reads SR. A helical transmembrane segment spans residues 440–466; the sequence is FSTAIFHLMQIAVPFAFLLLRLLVRLA. The Cytoplasmic portion of the chain corresponds to 467-499; the sequence is LAGLQVLWDLWPERPQQDQGEPETQSQLLPASC.

Belongs to the TMEM175 family. In terms of assembly, homodimer. Interacts with AKT (AKT1, AKT2 or AKT3); leading to formation of the lysoK(GF) complex, which activates the channel. Interacts with LAMP1; inhibiting the proton channel activity of TMEM175. Interacts with LAMP2; inhibiting the proton channel activity of TMEM175.

Its subcellular location is the endosome membrane. The protein resides in the lysosome membrane. It carries out the reaction H(+)(in) = H(+)(out). The enzyme catalyses K(+)(in) = K(+)(out). Its activity is regulated as follows. Active at low pH (under pH 4.6): proton channel activity is activated by luminal side protons. Polyunsaturated fatty acids, such as arachidonic acid, also activate the channel activity. Proton channel activity is directly inhibited by LAMP1 or LAMP2, facilitating lysosomal acidification. Channel activity is activated following interaction with AKT (AKT1, AKT2 or AKT3): interaction promotes activation from closed to an open state. Activation by AKT is independent of AKT serine/threonine-protein kinase activity. In terms of biological role, proton-activated proton channel that catalyzes proton efflux from endosomes and lysosomes to maintain a steady-state pH. Activated at low pH (under pH 4.6) by luminal side protons: selectively mediates lysosomal proton release from lysosomes, eliciting a proton leak that balances V-ATPase activity to maintain pH homeostasis. Regulation of lumenal pH stability is required for autophagosome-lysosome fusion. Also acts as a potassium channel at higher pH, regulating potassium conductance in endosomes and lysosomes. Constitutes the pore-forming subunit of the lysoK(GF) complex, a complex activated by extracellular growth factors. The lysoK(GF) complex is composed of TMEM175 and AKT (AKT1, AKT2 or AKT3), a major target of growth factor receptors: in the complex, TMEM175 channel is opened by conformational changes by AKT, leading to its activation. The lysoK(GF) complex is required to protect neurons against stress-induced damage. This chain is Endosomal/lysosomal proton channel TMEM175, found in Rattus norvegicus (Rat).